Here is a 671-residue protein sequence, read N- to C-terminus: Zinc finger protein 750 (671 aa).

Residues 25 to 51 (YKCFQCPFTCNEKSHLFNHMKYGLCKN) form a CCHC-type zinc finger. Zn(2+) contacts are provided by cysteine 27, cysteine 30, histidine 43, and cysteine 49. 3 disordered regions span residues 66–87 (PKVN…SPVP), 366–433 (ETSP…KDFT), and 592–671 (SSPG…PRVS). Composition is skewed to polar residues over residues 67–78 (KVNSTDQKQPSN) and 402–412 (SPTNFTQNSQG).

It localises to the nucleus. Transcription factor involved in epidermis differentiation. The sequence is that of Zinc finger protein 750 (znf750) from Xenopus tropicalis (Western clawed frog).